Consider the following 318-residue polypeptide: Tyrosine recombinase XerD (318 aa).

One can recognise a Core-binding (CB) domain in the interval 5–90; it reads PSDAKLTGLF…AMRHLYRFLL (86 aa). In terms of domain architecture, Tyr recombinase spans 111 to 310; that stretch reads GLPKVLSIAD…VEERLKSLVR (200 aa). Residues Arg161, Lys185, His262, Arg265, and His288 contribute to the active site. Tyr297 (O-(3'-phospho-DNA)-tyrosine intermediate) is an active-site residue.

It belongs to the 'phage' integrase family. XerD subfamily. In terms of assembly, forms a cyclic heterotetrameric complex composed of two molecules of XerC and two molecules of XerD.

Its subcellular location is the cytoplasm. In terms of biological role, site-specific tyrosine recombinase, which acts by catalyzing the cutting and rejoining of the recombining DNA molecules. The XerC-XerD complex is essential to convert dimers of the bacterial chromosome into monomers to permit their segregation at cell division. It also contributes to the segregational stability of plasmids. The polypeptide is Tyrosine recombinase XerD (Bradyrhizobium diazoefficiens (strain JCM 10833 / BCRC 13528 / IAM 13628 / NBRC 14792 / USDA 110)).